Reading from the N-terminus, the 354-residue chain is MMNNNGNQVSNLSNALRQVNIGNRNSNTTTDQSNINFEFSTGVNNNNNNNSSSNNNNVQNNNSGRNGSQNNDNENNIKNTLEQHRQQQQAFSDMSHVEYSRITKFFQEQPLEGYTLFSHRSAPNGFKVAIVLSELGFHYNTIFLDFNLGEHRAPEFVSVNPNARVPALIDHGMDNLSIWESGAILLHLVNKYYKETGNPLLWSDDLADQSQINAWLFFQTSGHAPMIGQALHFRYFHSQKIASAVERYTDEVRRVYGVVEMALAERREALVMELDTENAAAYSAGTTPMSQSRFFDYPVWLVGDKLTIADLAFVPWNNVVDRIGINIKIEFPEVYKWTKHMMRRPAVIKALRGE.

Met-2 bears the N-acetylmethionine mark. Residues 2–89 form a prion domain (PrD) region; sequence MNNNGNQVSN…TLEQHRQQQQ (88 aa). The span at 22 to 42 shows a compositional bias: polar residues; the sequence is GNRNSNTTTDQSNINFEFSTG. Positions 22–76 are disordered; that stretch reads GNRNSNTTTDQSNINFEFSTGVNNNNNNNSSSNNNNVQNNNSGRNGSQNNDNENN. Residues 43–73 show a composition bias toward low complexity; it reads VNNNNNNNSSSNNNNVQNNNSGRNGSQNNDN. A GST N-terminal domain is found at 112-196; sequence EGYTLFSHRS…HLVNKYYKET (85 aa). Glutathione-binding positions include Asn-124, His-151, 164–165, and 180–181; these read RV and ES. The 150-residue stretch at 205–354 folds into the GST C-terminal domain; that stretch reads DLADQSQINA…PAVIKALRGE (150 aa).

This sequence belongs to the GST superfamily. As to quaternary structure, homodimer. Interacts with NNK1.

It is found in the cytoplasm. It carries out the reaction 2 glutathione + H2O2 = glutathione disulfide + 2 H2O. Plays an important role in nitrogen catabolite repression. Down-regulates the expression of many genes involved in nitrogen utilization by inhibiting the GATA transcriptional activators GLN3 and GAT1. Under good nitrogen conditions, binds to the phosphorylated forms of GLN3 and GAT1 and sequesters them in the cytoplasm, preventing transcription of genes expressed upon nitrogen limitation. Is also an atypical glutaredoxin without a catalytical cysteine residue. Has glutathione peroxidase and thiol:disulfide oxidoreductase activities in both native and fibrillar form. Also shows insulin disulfide reductase and dehydroascorbic acid reductase (DHAR) activities. In Saccharomyces cerevisiae (strain ATCC 204508 / S288c) (Baker's yeast), this protein is Transcriptional regulator URE2 (URE2).